We begin with the raw amino-acid sequence, 612 residues long: uncharacterized protein (612 aa).

The segment at residues 6 to 32 is a DNA-binding region (zn(2)-C6 fungal-type); sequence CLYCRRRKIKCDKNRPCHNCFVAKREC.

Its subcellular location is the cytoplasm. The protein localises to the nucleus. This is an uncharacterized protein from Schizosaccharomyces pombe (strain 972 / ATCC 24843) (Fission yeast).